The primary structure comprises 69 residues: Putative membrane protein insertion efficiency factor (69 aa).

This sequence belongs to the UPF0161 family.

The protein resides in the cell membrane. In terms of biological role, could be involved in insertion of integral membrane proteins into the membrane. The sequence is that of Putative membrane protein insertion efficiency factor from Clostridium perfringens (strain SM101 / Type A).